The sequence spans 61 residues: DNA gyrase inhibitor YacG (61 aa).

4 residues coordinate Zn(2+): Cys14, Cys17, Cys29, and Cys33.

This sequence belongs to the DNA gyrase inhibitor YacG family. Interacts with GyrB. Requires Zn(2+) as cofactor.

Its function is as follows. Inhibits all the catalytic activities of DNA gyrase by preventing its interaction with DNA. Acts by binding directly to the C-terminal domain of GyrB, which probably disrupts DNA binding by the gyrase. This chain is DNA gyrase inhibitor YacG, found in Zymomonas mobilis subsp. mobilis (strain ATCC 31821 / ZM4 / CP4).